We begin with the raw amino-acid sequence, 186 residues long: UPF0301 protein CGSHiEE_01530 (186 aa).

It belongs to the UPF0301 (AlgH) family.

This Haemophilus influenzae (strain PittEE) protein is UPF0301 protein CGSHiEE_01530.